The following is a 2602-amino-acid chain: Non-reducing polyketide synthase SAT8 (2602 aa).

The active-site Nucleophile; for transacylase activity is the Cys130. His249 serves as the catalytic Proton donor/acceptor; for transacylase activity. A disordered region spans residues 379-398; it reads MLENSTSPPSPAATSSNSHC. Low complexity predominate over residues 382-396; that stretch reads NSTSPPSPAATSSNS. Residues 404–822 enclose the Ketosynthase family 3 (KS3) domain; that stretch reads PRDIAIVGMS…GSNAAMVVTQ (419 aa). Catalysis depends on for beta-ketoacyl synthase activity residues Cys571, His706, and His745. Residues 926–1216 are malonyl-CoA:ACP transacylase (MAT); that stretch reads FGGQMSTFVG…AMARRSLDSN (291 aa). Residues 1298–1442 form an N-terminal hotdog fold region; sequence GPLFGLLTFV…GKLDLLSSSE (145 aa). One can recognise a PKS/mFAS DH domain in the interval 1298-1618; sequence GPLFGLLTFV…YTRIPRHSMT (321 aa). The tract at residues 1331–1616 is product template (PT) domain; the sequence is LVIPHIIART…IAYTRIPRHS (286 aa). His1335 serves as the catalytic Proton acceptor; for dehydratase activity. Positions 1467-1618 are C-terminal hotdog fold; the sequence is GDVSGLQGRS…YTRIPRHSMT (152 aa). Asp1524 functions as the Proton donor; for dehydratase activity in the catalytic mechanism. The Carrier domain occupies 1658–1733; sequence DTLKQTVGQI…AFVRYISKVV (76 aa). An O-(pantetheine 4'-phosphoryl)serine modification is found at Ser1692. The interval 1737–1772 is disordered; sequence DDLGTPSHSDNDSHVTGTTATPNSSSASSDTHHGNS. Residues 1752–1765 are compositionally biased toward low complexity; it reads TGTTATPNSSSASS. The methyltransferase domain stretch occupies residues 1979-2150; that stretch reads VEKVKDDFQG…GYGHVDWTDG (172 aa). The NADPH-binding domain stretch occupies residues 2229–2530; that stretch reads IVVVTGATGS…IPLGEWVRKV (302 aa).

Pantetheine 4'-phosphate is required as a cofactor.

Its pathway is mycotoxin biosynthesis. Functionally, non-reducing polyketide synthase; part of the satratoxin SC1 cluster involved in the biosynthesis of satratoxins, trichothecene mycotoxins that are associated with human food poisonings. Satratoxins are suggested to be made by products of multiple gene clusters (SC1, SC2 and SC3) that encode 21 proteins in all, including polyketide synthases, acetyltransferases, and other enzymes expected to modify the trichothecene skeleton. SC1 encodes 10 proteins, SAT1 to SAT10. The largest are SAT8, which encodes a putative polyketide synthase (PKS) with a conventional non-reducing architecture, and SAT10, a putative protein containing four ankyrin repeats and thus may be involved in protein scaffolding. The putative short-chain reductase SAT3 may assist the PKS in some capacity. SAT6 contains a secretory lipase domain and acts probably as a trichothecene esterase. SAT5 encodes a putative acetyltransferase, and so, with SAT6, may affect endogenous protection from toxicity. The probable transcription factor SAT9 may regulate the expression of the SC1 cluster. SC2 encodes proteins SAT11 to SAT16, the largest of which encodes the putative reducing PKS SAT13. SAT11 is a cytochrome P450 monooxygenase, while SAT14 and SAT16 are probable acetyltransferases. The SC2 cluster may be regulated by the transcription factor SAT15. SC3 is a small cluster that encodes 5 proteins, SAT17 to SAT21. SAT21 is a putative MFS-type transporter which may have a role in exporting secondary metabolites. The four other proteins putatively encoded in SC3 include the taurine hydroxylase-like protein SAT17, the O-methyltransferase SAT18, the acetyltransferase SAT19, and the Cys6-type zinc finger SAT20, the latter being probably involved in regulation of SC3 expression. The polypeptide is Non-reducing polyketide synthase SAT8 (Stachybotrys chartarum (strain CBS 109288 / IBT 7711) (Toxic black mold)).